A 341-amino-acid polypeptide reads, in one-letter code: Delta(1)-pyrroline-2-carboxylate reductase (341 aa).

Ser47 functions as the Charge relay system in the catalytic mechanism. His48 functions as the Proton donor in the catalytic mechanism. Residue Arg52 coordinates substrate. NADP(+) is bound at residue 120–124 (HFSAL). Thr160 serves as a coordination point for substrate. 178–180 (DFA) contacts NADP(+). 186 to 187 (RG) provides a ligand contact to substrate. Residue Glu188 is the Charge relay system of the active site. NADP(+) contacts are provided by residues 229-230 (HK) and 305-311 (RLPSERR).

This sequence belongs to the LDH2/MDH2 oxidoreductase family. Homodimer.

The enzyme catalyses L-proline + NAD(+) = 1-pyrroline-2-carboxylate + NADH + H(+). The catalysed reaction is L-proline + NADP(+) = 1-pyrroline-2-carboxylate + NADPH + H(+). In terms of biological role, catalyzes the reduction of Delta(1)-pyrroline-2-carboxylate (Pyr2C) to L-proline, using NADPH as the electron donor. Is likely involved in a degradation pathway that converts cis- and trans-3-hydroxy-L-proline (c3LHyp and t3LHyp) to L-proline, which would allow S.novella to grow on c3LHyp or t3LHyp as a sole carbon source. The sequence is that of Delta(1)-pyrroline-2-carboxylate reductase from Ancylobacter novellus (strain ATCC 8093 / DSM 506 / JCM 20403 / CCM 1077 / IAM 12100 / NBRC 12443 / NCIMB 10456) (Starkeya novella).